The sequence spans 505 residues: SusD-like protein P2 (505 aa).

An N-terminal signal peptide occupies residues 1 to 17; that stretch reads MKKYKITFIVLLLTLVG. Residue cysteine 18 is the site of N-palmitoyl cysteine attachment. The S-diacylglycerol cysteine moiety is linked to residue cysteine 18.

The protein belongs to the SusD family.

It localises to the cell outer membrane. In terms of biological role, polysaccharide-binding protein probably involved in ulvan degradation. Ulvan is the main polysaccharide component of the Ulvales (green seaweed) cell wall. It is composed of disaccharide building blocks comprising 3-sulfated rhamnose (Rha3S) linked to D-glucuronic acid (GlcA), L-iduronic acid (IduA), or D-xylose (Xyl). The SusD-like protein may mediate ulvan oligomer-binding before transport in the periplasm for further degradation. The protein is SusD-like protein P2 of Formosa agariphila (strain DSM 15362 / KCTC 12365 / LMG 23005 / KMM 3901 / M-2Alg 35-1).